A 157-amino-acid polypeptide reads, in one-letter code: Ribosome maturation factor RimP (157 aa).

The protein belongs to the RimP family.

The protein resides in the cytoplasm. In terms of biological role, required for maturation of 30S ribosomal subunits. This is Ribosome maturation factor RimP from Thermobifida fusca (strain YX).